The chain runs to 153 residues: SsrA-binding protein (153 aa).

It belongs to the SmpB family.

It is found in the cytoplasm. In terms of biological role, required for rescue of stalled ribosomes mediated by trans-translation. Binds to transfer-messenger RNA (tmRNA), required for stable association of tmRNA with ribosomes. tmRNA and SmpB together mimic tRNA shape, replacing the anticodon stem-loop with SmpB. tmRNA is encoded by the ssrA gene; the 2 termini fold to resemble tRNA(Ala) and it encodes a 'tag peptide', a short internal open reading frame. During trans-translation Ala-aminoacylated tmRNA acts like a tRNA, entering the A-site of stalled ribosomes, displacing the stalled mRNA. The ribosome then switches to translate the ORF on the tmRNA; the nascent peptide is terminated with the 'tag peptide' encoded by the tmRNA and targeted for degradation. The ribosome is freed to recommence translation, which seems to be the essential function of trans-translation. In Macrococcus caseolyticus (strain JCSC5402) (Macrococcoides caseolyticum), this protein is SsrA-binding protein.